The sequence spans 83 residues: Small ribosomal subunit protein bS16 (83 aa).

This sequence belongs to the bacterial ribosomal protein bS16 family.

This is Small ribosomal subunit protein bS16 from Albidiferax ferrireducens (strain ATCC BAA-621 / DSM 15236 / T118) (Rhodoferax ferrireducens).